A 242-amino-acid chain; its full sequence is MILLIDAGNTRLKWRLAGTGGPLEGAGVMADAEPLIGLSGYWSDIDRILVSTVASESARAQLHELLLAGAKVPVEYCWAESTRDGLSNSYGDVSRMGADRWHAMLAGWVRCKASFAVVDAGSAVTVDYVNAGGRHLGGYILPGLQMMRRSLKVDAARIGFEQSEQLDTRPGQSTGECVNHGLAWLTEALVQRIHRDAKAFGLSAIYLTGGDARRLQALGLEANVVEGMVLDGLERIASAGVL.

6–13 (DAGNTRLK) is a binding site for ATP. Substrate is bound by residues Tyr90 and 97-100 (GADR). Residue Asp99 is the Proton acceptor of the active site. Asp119 is a binding site for K(+). Ser122 is an ATP binding site. Thr174 is a binding site for substrate.

This sequence belongs to the type III pantothenate kinase family. Homodimer. NH4(+) serves as cofactor. K(+) is required as a cofactor.

It is found in the cytoplasm. The catalysed reaction is (R)-pantothenate + ATP = (R)-4'-phosphopantothenate + ADP + H(+). It participates in cofactor biosynthesis; coenzyme A biosynthesis; CoA from (R)-pantothenate: step 1/5. In terms of biological role, catalyzes the phosphorylation of pantothenate (Pan), the first step in CoA biosynthesis. The polypeptide is Type III pantothenate kinase (Marinobacter nauticus (strain ATCC 700491 / DSM 11845 / VT8) (Marinobacter aquaeolei)).